Consider the following 131-residue polypeptide: Small ribosomal subunit protein uS11 (131 aa).

Belongs to the universal ribosomal protein uS11 family. In terms of assembly, part of the 30S ribosomal subunit. Interacts with proteins S7 and S18. Binds to IF-3.

In terms of biological role, located on the platform of the 30S subunit, it bridges several disparate RNA helices of the 16S rRNA. Forms part of the Shine-Dalgarno cleft in the 70S ribosome. This Halorhodospira halophila (strain DSM 244 / SL1) (Ectothiorhodospira halophila (strain DSM 244 / SL1)) protein is Small ribosomal subunit protein uS11.